Reading from the N-terminus, the 397-residue chain is Proteasome-activating nucleotidase (397 aa).

The stretch at 12 to 58 (GYEDYITFLKRRIRQLELQVRTLEADKERLERELSRLRTEMSRLRQP) forms a coiled coil. ATP-binding positions include 182 to 187 (GCGKTL) and His-321. A docks into pockets in the proteasome alpha-ring to cause gate opening region spans residues 395–397 (MYG).

This sequence belongs to the AAA ATPase family. Homohexamer. The hexameric complex has a two-ring architecture resembling a top hat that caps the 20S proteasome core at one or both ends. Upon ATP-binding, the C-terminus of PAN interacts with the alpha-rings of the proteasome core by binding to the intersubunit pockets.

It is found in the cytoplasm. ATPase which is responsible for recognizing, binding, unfolding and translocation of substrate proteins into the archaeal 20S proteasome core particle. Is essential for opening the gate of the 20S proteasome via an interaction with its C-terminus, thereby allowing substrate entry and access to the site of proteolysis. Thus, the C-termini of the proteasomal ATPase function like a 'key in a lock' to induce gate opening and therefore regulate proteolysis. Unfolding activity requires energy from ATP hydrolysis, whereas ATP binding alone promotes ATPase-20S proteasome association which triggers gate opening, and supports translocation of unfolded substrates. The polypeptide is Proteasome-activating nucleotidase (Thermococcus gammatolerans (strain DSM 15229 / JCM 11827 / EJ3)).